Here is a 144-residue protein sequence, read N- to C-terminus: Deoxyuridine 5'-triphosphate nucleotidohydrolase (144 aa).

Substrate contacts are provided by residues 63–65, Asn-76, and 80–82; these read RSG and TID.

It belongs to the dUTPase family. It depends on Mg(2+) as a cofactor.

The enzyme catalyses dUTP + H2O = dUMP + diphosphate + H(+). It functions in the pathway pyrimidine metabolism; dUMP biosynthesis; dUMP from dCTP (dUTP route): step 2/2. Its function is as follows. This enzyme is involved in nucleotide metabolism: it produces dUMP, the immediate precursor of thymidine nucleotides and it decreases the intracellular concentration of dUTP so that uracil cannot be incorporated into DNA. The sequence is that of Deoxyuridine 5'-triphosphate nucleotidohydrolase from Bacteroides fragilis (strain YCH46).